The chain runs to 240 residues: ATP-dependent dethiobiotin synthetase BioD (240 aa).

ATP is bound at residue 15–20 (EIGKTF). Residue Thr-19 coordinates Mg(2+). The active site involves Lys-40. ATP-binding positions include Asp-57, 118-121 (EGVG), and 178-179 (NR). Residues Asp-57 and Glu-118 each contribute to the Mg(2+) site.

Belongs to the dethiobiotin synthetase family. Homodimer. Mg(2+) is required as a cofactor.

The protein resides in the cytoplasm. The enzyme catalyses (7R,8S)-7,8-diammoniononanoate + CO2 + ATP = (4R,5S)-dethiobiotin + ADP + phosphate + 3 H(+). Its pathway is cofactor biosynthesis; biotin biosynthesis; biotin from 7,8-diaminononanoate: step 1/2. Functionally, catalyzes a mechanistically unusual reaction, the ATP-dependent insertion of CO2 between the N7 and N8 nitrogen atoms of 7,8-diaminopelargonic acid (DAPA, also called 7,8-diammoniononanoate) to form a ureido ring. In Burkholderia pseudomallei (strain K96243), this protein is ATP-dependent dethiobiotin synthetase BioD.